Reading from the N-terminus, the 719-residue chain is Pesticidal crystal protein Cry1Id (719 aa).

It belongs to the delta endotoxin family.

In terms of biological role, promotes colloidosmotic lysis by binding to the midgut epithelial cells of many lepidopteran larvae. Active on Plutella xylostella and on Bombyx mori. The sequence is that of Pesticidal crystal protein Cry1Id (cry1Id) from Bacillus thuringiensis.